Here is a 266-residue protein sequence, read N- to C-terminus: GTP cyclohydrolase III (266 aa).

The protein belongs to the archaeal-type GTP cyclohydrolase family.

The enzyme catalyses GTP + 3 H2O = 2-amino-5-formylamino-6-(5-phospho-D-ribosylamino)pyrimidin-4(3H)-one + 2 phosphate + 2 H(+). Catalyzes the formation of 2-amino-5-formylamino-6-ribofuranosylamino-4(3H)-pyrimidinone ribonucleotide monophosphate and inorganic phosphate from GTP. Also has an independent pyrophosphate phosphohydrolase activity. In Methanococcus vannielii (strain ATCC 35089 / DSM 1224 / JCM 13029 / OCM 148 / SB), this protein is GTP cyclohydrolase III.